Consider the following 220-residue polypeptide: Translation initiation factor 6 (220 aa).

It belongs to the eIF-6 family.

Functionally, binds to the 50S ribosomal subunit and prevents its association with the 30S ribosomal subunit to form the 70S initiation complex. The sequence is that of Translation initiation factor 6 from Pyrobaculum aerophilum (strain ATCC 51768 / DSM 7523 / JCM 9630 / CIP 104966 / NBRC 100827 / IM2).